The sequence spans 81 residues: Large ribosomal subunit protein bL31B (81 aa).

Belongs to the bacterial ribosomal protein bL31 family. Type B subfamily. In terms of assembly, part of the 50S ribosomal subunit.

In Borrelia garinii subsp. bavariensis (strain ATCC BAA-2496 / DSM 23469 / PBi) (Borreliella bavariensis), this protein is Large ribosomal subunit protein bL31B.